The sequence spans 182 residues: ATP synthase subunit delta (182 aa).

The protein belongs to the ATPase delta chain family. In terms of assembly, F-type ATPases have 2 components, F(1) - the catalytic core - and F(0) - the membrane proton channel. F(1) has five subunits: alpha(3), beta(3), gamma(1), delta(1), epsilon(1). CF(0) has four main subunits: a(1), b(1), b'(1) and c(10-14). The alpha and beta chains form an alternating ring which encloses part of the gamma chain. F(1) is attached to F(0) by a central stalk formed by the gamma and epsilon chains, while a peripheral stalk is formed by the delta, b and b' chains.

The protein localises to the cellular thylakoid membrane. In terms of biological role, f(1)F(0) ATP synthase produces ATP from ADP in the presence of a proton or sodium gradient. F-type ATPases consist of two structural domains, F(1) containing the extramembraneous catalytic core and F(0) containing the membrane proton channel, linked together by a central stalk and a peripheral stalk. During catalysis, ATP synthesis in the catalytic domain of F(1) is coupled via a rotary mechanism of the central stalk subunits to proton translocation. Functionally, this protein is part of the stalk that links CF(0) to CF(1). It either transmits conformational changes from CF(0) to CF(1) or is implicated in proton conduction. This chain is ATP synthase subunit delta, found in Synechococcus sp. (strain JA-3-3Ab) (Cyanobacteria bacterium Yellowstone A-Prime).